Here is a 271-residue protein sequence, read N- to C-terminus: Tryptophan synthase alpha chain (271 aa).

Catalysis depends on proton acceptor residues Glu-51 and Asp-62.

This sequence belongs to the TrpA family. As to quaternary structure, tetramer of two alpha and two beta chains.

The catalysed reaction is (1S,2R)-1-C-(indol-3-yl)glycerol 3-phosphate + L-serine = D-glyceraldehyde 3-phosphate + L-tryptophan + H2O. It participates in amino-acid biosynthesis; L-tryptophan biosynthesis; L-tryptophan from chorismate: step 5/5. In terms of biological role, the alpha subunit is responsible for the aldol cleavage of indoleglycerol phosphate to indole and glyceraldehyde 3-phosphate. This is Tryptophan synthase alpha chain from Prochlorococcus marinus (strain NATL2A).